A 364-amino-acid chain; its full sequence is F-box protein At1g59680 (364 aa).

Residues 2 to 49 (TTMSDLSVDLVGEILSRVPLTSLSAVRCTCKSWNTLSKHQIFGKAELA) enclose the F-box domain.

The chain is F-box protein At1g59680 from Arabidopsis thaliana (Mouse-ear cress).